Here is a 602-residue protein sequence, read N- to C-terminus: DNA ligase (602 aa).

Residue E262 participates in ATP binding. K264 (N6-AMP-lysine intermediate) is an active-site residue. Residues R269, R284, E314, F354, R431, and K437 each contribute to the ATP site.

Belongs to the ATP-dependent DNA ligase family. Monomer. The cofactor is Mg(2+). Mn(2+) serves as cofactor.

It catalyses the reaction ATP + (deoxyribonucleotide)n-3'-hydroxyl + 5'-phospho-(deoxyribonucleotide)m = (deoxyribonucleotide)n+m + AMP + diphosphate.. The enzyme catalyses ADP + (deoxyribonucleotide)n-3'-hydroxyl + 5'-phospho-(deoxyribonucleotide)m = (deoxyribonucleotide)n+m + AMP + phosphate.. It carries out the reaction GTP + (deoxyribonucleotide)n-3'-hydroxyl + 5'-phospho-(deoxyribonucleotide)m = (deoxyribonucleotide)n+m + GMP + diphosphate.. Inhibited in the presence of 100 mM KCl, NaCl or NH(4)Cl. In terms of biological role, DNA ligase that seals nicks in double-stranded DNA during DNA replication, DNA recombination and DNA repair. Can also use ADP, but not NAD(+). This is DNA ligase from Aeropyrum pernix (strain ATCC 700893 / DSM 11879 / JCM 9820 / NBRC 100138 / K1).